The sequence spans 723 residues: MDKTELCECLVQWLQTFNLNAPHKTVEDLGDGVAMSEALCQIAPDYFSESWFGKIKQDAGENWRLRMSNLKKVLTGVLDYYSEVLGQQINDFTLPDVTSIAENYDVEEMGRLLQLILGCAVNCDRKQEYIQNIMGMEEAVQHAVMNAIQELMNKEAPASPGVLPEVEKQLRDTMEELNEVRAAKEEIAQRCHELDMQVQQLMEENTLMKVEKDELSDKVNQVDGYEDTSTPAGRRYIQLTHQVEQLQEETYRLETGRDEYRLKCEEMEKEILDLAGKNEELMALAAETQLLKDEMDILRQSAEKTSKYEQTIETYKKKLEDLADLRRTVEQLQEETYRLETGLSHCELRKANTLRSQLDMYKKQVQELHGKVSEETKRADKAEFELKRSTEKLDTVQKEKQRIVNERDTLKETNEELHCMQLQQGKAMLYSTGSLAGIGSNVESPVGSPIPEVVPPEIKEKLIRLQHENKMLKLKAEGSDDERLAVSQAMLDDAQARTNELETENRLANQRILELQGQLEDMQTEQEEVGSPAKDQDSVALRKKLEEHMEKLKDADSQLQKKKEYIDNLEPKVSSSAEKIQQLQEMLNKKDDDMKAMEERYKRYLEKAKSVIRTLDPKQNQSSTPEVQALKNQLTEKERLIDHLERDHEKAKLTREQEEKLIVSAWYNMGAQLHRKAVEGRLANGGPMQGGQSFLARQRQATSRRTTVSTTHPGHARSVNFVN.

A Calponin-homology (CH) domain is found at 4–120; sequence TELCECLVQW…RLLQLILGCA (117 aa). 2 coiled-coil regions span residues 162–423 and 457–665; these read VLPE…MQLQ and EIKE…IVSA. The interval 682–723 is disordered; sequence LANGGPMQGGQSFLARQRQATSRRTTVSTTHPGHARSVNFVN. Over residues 696-711 the composition is skewed to low complexity; the sequence is ARQRQATSRRTTVSTT.

It belongs to the hook family. In terms of assembly, interacts with microtubules.

It localises to the cytoplasm. It is found in the cytoskeleton. Its function is as follows. May function to promote vesicle trafficking and/or fusion. May act to link a number of membrane-bound organelles to the cytoskeleton. The polypeptide is Protein Hook homolog (Branchiostoma floridae (Florida lancelet)).